A 204-amino-acid chain; its full sequence is Large ribosomal subunit protein eL15 (204 aa).

The interval 155 to 204 (VHKHREQRGLTSAGRKSRGLGKGWRFSATRGGSQAKNWKRKNTKVFHRKR) is disordered. Basic residues predominate over residues 191–204 (NWKRKNTKVFHRKR).

Belongs to the eukaryotic ribosomal protein eL15 family.

The sequence is that of Large ribosomal subunit protein eL15 (rpl-15) from Caenorhabditis elegans.